The chain runs to 323 residues: Cuticle collagen 39 (323 aa).

Residues 1–28 form the signal peptide; that stretch reads MTGPTCLAVVAGISGVFVFGALFSVAQI. Over residues 80–89 the composition is skewed to polar residues; that stretch reads QCNCGPQASN. Residues 80–293 are disordered; sequence QCNCGPQASN…GAAEQGYRHR (214 aa). Triple-helical region stretches follow at residues 93–125, 138–200, and 203–265; these read GPPG…AGPK, GSPG…GGQR, and GLPG…PGAD. Over residues 108–117 the composition is skewed to gly residues; sequence GQPGGAGNPG. The span at 136–146 shows a compositional bias: low complexity; it reads PAGSPGPAGAP. Residues 159–168 are compositionally biased toward gly residues; the sequence is GHPGQGGSQG. A compositionally biased stretch (low complexity) spans 169–191; it reads PAGPRGPAGDAGAPGQVGAPGNP. Residues 224–233 show a composition bias toward gly residues; it reads GQSGGQGQQG. Residues 234-267 are compositionally biased toward low complexity; that stretch reads PAGPAGPDGQPGQPGQDGQAGAPGNDGAPGADAA.

This sequence belongs to the cuticular collagen family. In terms of assembly, collagen polypeptide chains are complexed within the cuticle by disulfide bonds and other types of covalent cross-links.

Functionally, nematode cuticles are composed largely of collagen-like proteins. The cuticle functions both as an exoskeleton and as a barrier to protect the worm from its environment. The sequence is that of Cuticle collagen 39 (col-39) from Caenorhabditis elegans.